The following is a 360-amino-acid chain: Photosystem II protein D1 3 (360 aa).

Helical transmembrane passes span Y29–I46, H118–L133, and W142–A156. Chlorophyll a is bound at residue H118. Y126 lines the pheophytin a pocket. [CaMn4O5] cluster-binding residues include D170 and E189. Residues F197–L218 form a helical membrane-spanning segment. H198 is a chlorophyll a binding site. A quinone is bound by residues H215 and S264 to F265. H215 is a binding site for Fe cation. Residue H272 coordinates Fe cation. The helical transmembrane segment at F274–M288 threads the bilayer. 4 residues coordinate [CaMn4O5] cluster: H332, E333, D342, and A344. The propeptide occupies A345–G360.

Belongs to the reaction center PufL/M/PsbA/D family. In terms of assembly, PSII is composed of 1 copy each of membrane proteins PsbA, PsbB, PsbC, PsbD, PsbE, PsbF, PsbH, PsbI, PsbJ, PsbK, PsbL, PsbM, PsbT, PsbX, PsbY, PsbZ, Psb30/Ycf12, peripheral proteins PsbO, CyanoQ (PsbQ), PsbU, PsbV and a large number of cofactors. It forms dimeric complexes. The cofactor is The D1/D2 heterodimer binds P680, chlorophylls that are the primary electron donor of PSII, and subsequent electron acceptors. It shares a non-heme iron and each subunit binds pheophytin, quinone, additional chlorophylls, carotenoids and lipids. D1 provides most of the ligands for the Mn4-Ca-O5 cluster of the oxygen-evolving complex (OEC). There is also a Cl(-1) ion associated with D1 and D2, which is required for oxygen evolution. The PSII complex binds additional chlorophylls, carotenoids and specific lipids.. In terms of processing, tyr-161 forms a radical intermediate that is referred to as redox-active TyrZ, YZ or Y-Z. Post-translationally, C-terminally processed by CtpA; processing is essential to allow assembly of the oxygen-evolving complex and thus photosynthetic growth.

It localises to the cellular thylakoid membrane. The catalysed reaction is 2 a plastoquinone + 4 hnu + 2 H2O = 2 a plastoquinol + O2. Photosystem II (PSII) is a light-driven water:plastoquinone oxidoreductase that uses light energy to abstract electrons from H(2)O, generating O(2) and a proton gradient subsequently used for ATP formation. It consists of a core antenna complex that captures photons, and an electron transfer chain that converts photonic excitation into a charge separation. The D1/D2 (PsbA/PsbD) reaction center heterodimer binds P680, the primary electron donor of PSII as well as several subsequent electron acceptors. The polypeptide is Photosystem II protein D1 3 (Synechococcus sp. (strain ATCC 27144 / PCC 6301 / SAUG 1402/1) (Anacystis nidulans)).